The primary structure comprises 776 residues: Peregrinol diphosphate synthase CPS1, chloroplastic (776 aa).

The transit peptide at 1 to 17 (MASTPTLNLSITTPFVR) directs the protein to the chloroplast. Lys238 serves as a coordination point for substrate. The Mg(2+) site is built by Asp371 and Asp373. The DXDD motif motif lies at 371-374 (DIDD). Position 457 (Lys457) interacts with substrate.

Belongs to the terpene synthase family. The cofactor is Mg(2+). In terms of tissue distribution, present in both leaves and flowers, with higher levels in leaves.

The protein localises to the plastid. Its subcellular location is the chloroplast. It catalyses the reaction peregrinol diphosphate = (2E,6E,10E)-geranylgeranyl diphosphate + H2O. It functions in the pathway secondary metabolite biosynthesis; terpenoid biosynthesis. Functionally, involved in the biosynthesis of labdane-type diterpenoid including marrubiin and other labdane-related furanoid diterpenoids with potential applications as anti-diabetics, analgesics or vasorelaxants. Terpene synthase that produces peregrinol diphosphate from geranylgeranyl diphosphate (GGPP). In Marrubium vulgare (White horehound), this protein is Peregrinol diphosphate synthase CPS1, chloroplastic.